We begin with the raw amino-acid sequence, 279 residues long: GTP cyclohydrolase MptA (279 aa).

Belongs to the GTP cyclohydrolase IV family. In terms of assembly, homodimer. The cofactor is Fe(2+).

The enzyme catalyses GTP + H2O = 7,8-dihydroneopterin 2',3'-cyclic phosphate + formate + diphosphate + H(+). It functions in the pathway cofactor biosynthesis; 5,6,7,8-tetrahydromethanopterin biosynthesis. Converts GTP to 7,8-dihydro-D-neopterin 2',3'-cyclic phosphate, the first intermediate in the biosynthesis of coenzyme methanopterin. The polypeptide is GTP cyclohydrolase MptA (Korarchaeum cryptofilum (strain OPF8)).